We begin with the raw amino-acid sequence, 290 residues long: Plasma membrane ascorbate-dependent reductase CYBRD1 (290 aa).

Residues 1–7 are Cytoplasmic-facing; the sequence is MAMEGYR. Residues 8 to 32 traverse the membrane as a helical segment; it reads GFLGLLVSALLVGFLSVIFVLIWVL. One can recognise a Cytochrome b561 domain in the interval 15–220; that stretch reads SALLVGFLSV…FGALIFWIVT (206 aa). Topologically, residues 33 to 47 are extracellular; sequence HFREGLGWNGSGLEF. Residues 48–69 form a helical membrane-spanning segment; it reads NWHPVLAVTGFVFIQGIAIIVY. Heme b-binding residues include histidine 50, arginine 70, and lysine 79. The Cytoplasmic segment spans residues 70–78; it reads RLPWTWKCS. 2 residues coordinate L-ascorbate: lysine 79 and lysine 83. The chain crosses the membrane as a helical span at residues 79–105; it reads KLLMKSIHAGLNAVAAILAIISVVAVF. Residue histidine 86 participates in heme b binding. The Extracellular segment spans residues 106 to 118; it reads EYHNVQKVPHMYS. Fe(3+) is bound at residue histidine 108. Heme b is bound by residues 115-118 and histidine 120; that span reads HMYS. A helical transmembrane segment spans residues 119 to 144; it reads LHSWVGLTALILYIQQLVVGFFVFLL. The Cytoplasmic portion of the chain corresponds to 145–151; sequence PWAPPSL. Residue arginine 152 participates in L-ascorbate binding. A helical membrane pass occupies residues 152 to 179; sequence RAIVMPIHVYSGLLLFGTVIATVLMGVT. Heme b is bound by residues histidine 159 and glutamate 180. Residues 180 to 197 lie on the Extracellular side of the membrane; that stretch reads EKLFFVLKHPSYHSFPPE. The helical transmembrane segment at 198–222 threads the bilayer; it reads GVFTNTLGLLILVFGALIFWIVTRP. The Cytoplasmic segment spans residues 223 to 290; the sequence is QWKRPREPGS…LADSGQRSTM (68 aa). Position 225 (lysine 225) interacts with heme b. A Phosphoserine modification is found at serine 232. The segment at 257–290 is disordered; the sequence is SMDAADPADAESSSEGAARKRTLGLADSGQRSTM. A compositionally biased stretch (low complexity) spans 260-272; the sequence is AADPADAESSSEG. Position 289 is a phosphothreonine (threonine 289).

As to quaternary structure, homodimer. The cofactor is heme b. In terms of tissue distribution, highly expressed in the brush-border membrane of duodenal enterocytes (at protein level). Also expressed in liver and spleen.

It is found in the cell membrane. It localises to the apical cell membrane. It catalyses the reaction Fe(3+)(out) + L-ascorbate(in) = monodehydro-L-ascorbate radical(in) + Fe(2+)(out) + H(+). The enzyme catalyses Cu(2+)(out) + L-ascorbate(in) = Cu(+)(out) + monodehydro-L-ascorbate radical(in) + H(+). The catalysed reaction is monodehydro-L-ascorbate radical(out) + L-ascorbate(in) = monodehydro-L-ascorbate radical(in) + L-ascorbate(out). Its function is as follows. Plasma membrane reductase that uses cytoplasmic ascorbate as an electron donor to reduce extracellular Fe(3+) into Fe(2+). Probably functions in dietary iron absorption at the brush border of duodenal enterocytes by producing Fe(2+), the divalent form of iron that can be transported into enterocytes. It is also able to reduce extracellular monodehydro-L-ascorbate and may be involved in extracellular ascorbate regeneration by erythrocytes in blood. May also act as a ferrireductase in airway epithelial cells. May also function as a cupric transmembrane reductase. In Mus musculus (Mouse), this protein is Plasma membrane ascorbate-dependent reductase CYBRD1.